Here is a 382-residue protein sequence, read N- to C-terminus: Mannitol-1-phosphate 5-dehydrogenase (382 aa).

3 to 14 serves as a coordination point for NAD(+); it reads ALHFGAGNIGRG. At Lys269 the chain carries N6-acetyllysine.

The protein belongs to the mannitol dehydrogenase family.

It carries out the reaction D-mannitol 1-phosphate + NAD(+) = beta-D-fructose 6-phosphate + NADH + H(+). This Escherichia coli O127:H6 (strain E2348/69 / EPEC) protein is Mannitol-1-phosphate 5-dehydrogenase.